A 410-amino-acid polypeptide reads, in one-letter code: WD repeat and FYVE domain-containing protein 1 (410 aa).

WD repeat units follow at residues 22 to 61 (GHQD…QYWP), 66 to 105 (TMAS…NKMN), 112 to 150 (AHQN…NMLG), 153 to 192 (FFSS…CSVI), 197 to 236 (GHEG…GRTL), and 240 to 279 (GHHD…EEAP). Residues 281–352 (WLESDSCQKC…VCDSCYDSIK (72 aa)) form an FYVE-type zinc finger. Zn(2+)-binding residues include C287, C290, C314, C317, C322, C325, C344, and C347. Residues 364-403 (EGKHNISHMSMDIARGLMVTCGTDRVVKIWDMTPVVGCSL) form a WD 7 repeat. A Phosphoserine modification is found at S408.

As to quaternary structure, binds PtdIns3P in vitro with high specificity over other phosphoinositides. Interacts (via WD repeat 2) with tyrosine-phosphorylated TLR3 (via TIR domain) in response to poly(I:C). Interacts with TLR4 in response to LPS. Interacts with TICAM1 in response to poly(I:C).

It is found in the early endosome. Functionally, positively regulates TLR3- and TLR4-mediated signaling pathways by bridging the interaction between TLR3 or TLR4 and TICAM1. Promotes TLR3/4 ligand-induced activation of transcription factors IRF3 and NF-kappa-B, as well as the production of IFN-beta and inflammatory cytokines. The chain is WD repeat and FYVE domain-containing protein 1 (Wdfy1) from Mus musculus (Mouse).